The sequence spans 349 residues: Putative inosamine-phosphate amidinotransferase 2 (349 aa).

Belongs to the amidinotransferase family.

The enzyme catalyses 1-amino-1-deoxy-scyllo-inositol 4-phosphate + L-arginine = 1-guanidino-1-deoxy-scyllo-inositol 4-phosphate + L-ornithine. It participates in antibiotic biosynthesis; streptomycin biosynthesis. It is not obvious if strB2 participates in streptomycin biosynthesis as an inosamine-phosphate amidinotransferase. Attempt to measure its activity have failed and the nucleophilic cysteine which is the key residue for amidine transfer is not conserved but replaced by a glycine residue. This is Putative inosamine-phosphate amidinotransferase 2 (strB2) from Streptomyces griseus.